The chain runs to 375 residues: 23S rRNA (uracil(747)-C(5))-methyltransferase RlmC (375 aa).

Positions 3, 11, 14, and 87 each coordinate [4Fe-4S] cluster. The S-adenosyl-L-methionine site is built by Q212, F241, E262, and N307. The active-site Nucleophile is the C334.

It belongs to the class I-like SAM-binding methyltransferase superfamily. RNA M5U methyltransferase family. RlmC subfamily.

The enzyme catalyses uridine(747) in 23S rRNA + S-adenosyl-L-methionine = 5-methyluridine(747) in 23S rRNA + S-adenosyl-L-homocysteine + H(+). Its function is as follows. Catalyzes the formation of 5-methyl-uridine at position 747 (m5U747) in 23S rRNA. This chain is 23S rRNA (uracil(747)-C(5))-methyltransferase RlmC, found in Serratia proteamaculans (strain 568).